Consider the following 343-residue polypeptide: Ubiquitin carboxyl-terminal hydrolase isozyme L5 (343 aa).

Positions 6–218 (GWCTIESDPG…IRFNLMAVIK (213 aa)) constitute a UCH catalytic domain. Catalysis depends on Cys83, which acts as the Nucleophile. Residue His157 is the Proton donor of the active site. The segment at 242-266 (LSELNSGSGGDNKEESGGATPTTKE) is disordered. The ULD domain maps to 306-334 (NFTPLILNLIKGLAEKDNLQPLIQKAKDQ).

It belongs to the peptidase C12 family. In terms of assembly, component of the 19S (PA700) regulatory complex of the 26S proteasome.

The protein resides in the cytoplasm. The protein localises to the nucleus. It carries out the reaction Thiol-dependent hydrolysis of ester, thioester, amide, peptide and isopeptide bonds formed by the C-terminal Gly of ubiquitin (a 76-residue protein attached to proteins as an intracellular targeting signal).. Functionally, protease that specifically cleaves 'Lys-48'-linked polyubiquitin chains. Deubiquitinating enzyme associated with the 19S regulatory subunit of the 26S proteasome. The polypeptide is Ubiquitin carboxyl-terminal hydrolase isozyme L5 (uch2) (Dictyostelium discoideum (Social amoeba)).